Reading from the N-terminus, the 227-residue chain is NADH-quinone oxidoreductase subunit C (227 aa).

Belongs to the complex I 30 kDa subunit family. NDH-1 is composed of 14 different subunits. Subunits NuoB, C, D, E, F, and G constitute the peripheral sector of the complex.

It localises to the cell inner membrane. It carries out the reaction a quinone + NADH + 5 H(+)(in) = a quinol + NAD(+) + 4 H(+)(out). Its function is as follows. NDH-1 shuttles electrons from NADH, via FMN and iron-sulfur (Fe-S) centers, to quinones in the respiratory chain. The immediate electron acceptor for the enzyme in this species is believed to be ubiquinone. Couples the redox reaction to proton translocation (for every two electrons transferred, four hydrogen ions are translocated across the cytoplasmic membrane), and thus conserves the redox energy in a proton gradient. This is NADH-quinone oxidoreductase subunit C from Legionella pneumophila (strain Corby).